A 131-amino-acid chain; its full sequence is Phosphoribosyl-AMP cyclohydrolase (131 aa).

Residue Asp74 coordinates Mg(2+). Cys75 contacts Zn(2+). Mg(2+)-binding residues include Asp76 and Asp78. 2 residues coordinate Zn(2+): Cys91 and Cys98.

The protein belongs to the PRA-CH family. Homodimer. The cofactor is Mg(2+). Zn(2+) is required as a cofactor.

It is found in the cytoplasm. It catalyses the reaction 1-(5-phospho-beta-D-ribosyl)-5'-AMP + H2O = 1-(5-phospho-beta-D-ribosyl)-5-[(5-phospho-beta-D-ribosylamino)methylideneamino]imidazole-4-carboxamide. Its pathway is amino-acid biosynthesis; L-histidine biosynthesis; L-histidine from 5-phospho-alpha-D-ribose 1-diphosphate: step 3/9. Catalyzes the hydrolysis of the adenine ring of phosphoribosyl-AMP. The polypeptide is Phosphoribosyl-AMP cyclohydrolase (Bradyrhizobium sp. (strain BTAi1 / ATCC BAA-1182)).